The sequence spans 252 residues: Mitochondrial peculiar membrane protein 1 (252 aa).

The tract at residues 230 to 252 is disordered; that stretch reads TTTTSKGSSPQVKHKVVSVDEDN.

It is found in the mitochondrion membrane. This Saccharomyces cerevisiae (strain ATCC 204508 / S288c) (Baker's yeast) protein is Mitochondrial peculiar membrane protein 1 (MPM1).